The chain runs to 627 residues: MAGKISKEELEELREAFGKVDLNGNGFICDHELHDLFKEANLPLPGYKVREIIQKLMEEGDKNKDNMISFDEFVSIFQELKSGDIAKSFRKAINRKEGILAIGGTSELSSAGTQHSFSEEERFAFVNWINTALEHDPDCKHKLPMNPNTDALFKAVGDGIVLCKMINLSVPDTIDERTINKKKLTPFTIQENLNLALNSASAIGCHVVNIGALDLREGKPHLVLGLLWQIIKIGLFADIELSRNEALAALLRDGETLEDLMKLSPEELLLRWANFHLENAGWSKINNFSHDIKDSRAYFHLLNQIAPKGQKDGESRIDIDMSGFTEKDDLKRAECMLLQADKLGCRQFVTSTDVMSGNPKLNLAFVANLFNKYPALTKPENQDINWGLLEGETREERTFRNWMNSLGVNPHVNHLYGDLQDALVILQLYEKIKVPVDWNNKVNKPPYPKLGANMKKLENCNYAVELGKTKANFSLVGIGGQDLNDGNPTLTLALVWQLMRRYTLNVLENLGDGQKVNDDVIVSWVNKTLSQAGKSTKISNFKDKEISSSLAVLDLIDAIQPSSINYDLVKRGSLSDGDKLDNAKYAVSMARKIGARVYALPEDLVEVKPKMVMTVFACLMGRGMKRA.

EF-hand domains are found at residues 8–43 (EELE…ANLP) and 48–83 (KVRE…LKSG). Ca(2+) is bound by residues Asp21, Asn23, Asn25, Glu32, Asp61, Asn63, Asp65, Met67, and Glu72. Actin-binding stretches follow at residues 105–378 (TSEL…ALTK) and 379–624 (PENQ…GRGM). Calponin-homology (CH) domains follow at residues 119-235 (EEER…KIGL), 263-374 (LSPE…NKYP), 393-503 (TREE…RRYT), and 515-624 (KVND…GRGM).

Its subcellular location is the cytoplasm. Actin-bundling protein. This Danio rerio (Zebrafish) protein is Plastin-3 (pls3).